We begin with the raw amino-acid sequence, 156 residues long: Ribosomal RNA large subunit methyltransferase H (156 aa).

S-adenosyl-L-methionine is bound by residues L73, G104, and 123–128; that span reads LSALTL.

It belongs to the RNA methyltransferase RlmH family. Homodimer.

The protein localises to the cytoplasm. It catalyses the reaction pseudouridine(1915) in 23S rRNA + S-adenosyl-L-methionine = N(3)-methylpseudouridine(1915) in 23S rRNA + S-adenosyl-L-homocysteine + H(+). Specifically methylates the pseudouridine at position 1915 (m3Psi1915) in 23S rRNA. This is Ribosomal RNA large subunit methyltransferase H from Shewanella denitrificans (strain OS217 / ATCC BAA-1090 / DSM 15013).